We begin with the raw amino-acid sequence, 307 residues long: Olfactory receptor 13G1 (307 aa).

At 1–22 (MNHSVVTEFIILGLTKKPELQG) the chain is on the extracellular side. The N-linked (GlcNAc...) asparagine glycan is linked to Asn-2. A helical transmembrane segment spans residues 23 to 43 (IIFLFFLIVYLVAFLGNMLII). Topologically, residues 44-51 (IAKIYNNT) are cytoplasmic. A helical membrane pass occupies residues 52-72 (LHTPMYVFLLTLAVVDIICTT). Topologically, residues 73-96 (SIIPKMLGTMLTSENTISYAGCMS) are extracellular. Cys-94 and Cys-186 form a disulfide bridge. The helical transmembrane segment at 97-117 (QLFLFTWSLGAEMVLFTTMAY) threads the bilayer. At 118-136 (DRYVAICFPLHYSTIMNHH) the chain is on the cytoplasmic side. The helical transmembrane segment at 137 to 157 (MCVALLSMVMAIAVTNSWVHT) threads the bilayer. Residues 158–194 (ALIMRLTFCGPNTIDHFFCEIPPLLALSCSPVRINEV) are Extracellular-facing. The helical transmembrane segment at 195-214 (MVYVADITLAIGDFILTCIS) threads the bilayer. Over 215–234 (YGFIIVAILRIRTVEGKRKA) the chain is Cytoplasmic. A helical transmembrane segment spans residues 235–255 (FSTCSSHLTVVTLYYSPVIYT). Residues 256–268 (YIRPASSYTFERD) are Extracellular-facing. The helical transmembrane segment at 269–289 (KVVAALYTLVTPTLNPMVYSF) threads the bilayer. At 290–307 (QNREMQAGIRKVFAFLKH) the chain is on the cytoplasmic side.

The protein belongs to the G-protein coupled receptor 1 family.

Its subcellular location is the cell membrane. In terms of biological role, odorant receptor. The protein is Olfactory receptor 13G1 (OR13G1) of Homo sapiens (Human).